The primary structure comprises 475 residues: Squamosa promoter-binding-like protein 12 (475 aa).

The segment at 49–73 is disordered; sequence NHGSTNSSGGTFTSSSELANGSSKS. Positions 51 to 73 are enriched in low complexity; that stretch reads GSTNSSGGTFTSSSELANGSSKS. An SBP-type zinc finger spans residues 177-254; it reads SSYCQVEGCK…SDHNARRRKP (78 aa). The Zn(2+) site is built by C180, C185, C202, H205, C221, C224, H228, and C240. Positions 237 to 253 match the Bipartite nuclear localization signal motif; that stretch reads KKSCRRRLSDHNARRRK. The tract at residues 437–475 is disordered; sequence GGGGFWQDGDDPPPLDHASQAQAFMHPGNGSSSGYGHLH. Residues 465 to 475 show a composition bias toward polar residues; sequence NGSSSGYGHLH.

In terms of tissue distribution, expressed in young panicles.

It localises to the nucleus. Functionally, trans-acting factor that binds specifically to the consensus nucleotide sequence 5'-TNCGTACAA-3'. May be involved in panicle development. This is Squamosa promoter-binding-like protein 12 (SPL12) from Oryza sativa subsp. japonica (Rice).